Here is a 33-residue protein sequence, read N- to C-terminus: Glutaminase-asparaginase (33 aa).

The region spanning 1-33 (NVVVLATGGTIAGAGTNAFASQXGPLGMVVEGK) is the Asparaginase/glutaminase domain. The active-site Acyl-ester intermediate is threonine 10.

This sequence belongs to the asparaginase 1 family. In terms of assembly, homotetramer.

The protein localises to the periplasm. The enzyme catalyses L-glutamine + H2O = L-glutamate + NH4(+). It catalyses the reaction L-asparagine + H2O = L-aspartate + NH4(+). In Delftia acidovorans (Pseudomonas acidovorans), this protein is Glutaminase-asparaginase (ansB).